Reading from the N-terminus, the 1357-residue chain is DNA-directed RNA polymerase subunit beta (1357 aa).

The protein belongs to the RNA polymerase beta chain family. In terms of assembly, the RNAP catalytic core consists of 2 alpha, 1 beta, 1 beta' and 1 omega subunit. When a sigma factor is associated with the core the holoenzyme is formed, which can initiate transcription.

It catalyses the reaction RNA(n) + a ribonucleoside 5'-triphosphate = RNA(n+1) + diphosphate. DNA-dependent RNA polymerase catalyzes the transcription of DNA into RNA using the four ribonucleoside triphosphates as substrates. The sequence is that of DNA-directed RNA polymerase subunit beta from Pseudomonas entomophila (strain L48).